We begin with the raw amino-acid sequence, 318 residues long: Ferrochelatase (318 aa).

Residues histidine 186 and glutamate 264 each contribute to the Fe cation site.

Belongs to the ferrochelatase family.

It is found in the cytoplasm. The enzyme catalyses heme b + 2 H(+) = protoporphyrin IX + Fe(2+). It functions in the pathway porphyrin-containing compound metabolism; protoheme biosynthesis; protoheme from protoporphyrin-IX: step 1/1. Its function is as follows. Catalyzes the ferrous insertion into protoporphyrin IX. This chain is Ferrochelatase, found in Chlamydia felis (strain Fe/C-56) (Chlamydophila felis).